The following is an 846-amino-acid chain: Selenocysteine insertion sequence-binding protein 2 (846 aa).

2 stretches are compositionally biased toward basic and acidic residues: residues 151–165 and 206–215; these read RRAW…RRAD and PEFEFSRLDF. 5 disordered regions span residues 151-246, 266-288, 321-440, 448-467, and 475-613; these read RRAW…SNMS, TDHT…TREL, TTSS…VPVQ, AALE…RPVV, and VLSK…DSAT. The residue at position 220 (Ser220) is a Phosphoserine. Polar residues-rich tracts occupy residues 220–232, 272–288, and 321–342; these read SPKN…TQKQ, AVTN…TREL, and TTSS…SDPS. The Nuclear localization signal motif lies at 370-380; sequence KKNKKKKEKSK. Residues 417 to 428 are compositionally biased toward polar residues; sequence KLQSKQQAQNDF. A compositionally biased stretch (basic and acidic residues) spans 527 to 536; sequence ILKERQERMQ. A compositionally biased stretch (polar residues) spans 542–551; sequence SAVSPTVASD. Positions 666 to 687 are RNA-binding; sequence LVLGLREVLKHLKLRKLKCIII. A disordered region spans residues 774-804; that stretch reads RQEQAGEPGPQTPPSPPMQDPIQSTDEGTLA. Over residues 783–792 the composition is skewed to pro residues; that stretch reads PQTPPSPPMQ.

In terms of tissue distribution, ubiquitous.

The protein resides in the cytoplasm. It is found in the nucleus. Functionally, mRNA-binding protein that binds to the SECIS (selenocysteine insertion sequence) element present in the 3'-UTR of mRNAs encoding selenoproteins and facilitates the incorporation of the rare amino acid selenocysteine. Insertion of selenocysteine at UGA codons is mediated by SECISBP2 and EEFSEC: SECISBP2 (1) specifically binds the SECIS sequence once the 80S ribosome encounters an in-frame UGA codon and (2) contacts the RPS27A/eS31 of the 40S ribosome before ribosome stalling. (3) GTP-bound EEFSEC then delivers selenocysteinyl-tRNA(Sec) to the 80S ribosome and adopts a preaccommodated state conformation. (4) After GTP hydrolysis, EEFSEC dissociates from the assembly, selenocysteinyl-tRNA(Sec) accommodates, and peptide bond synthesis and selenoprotein elongation occur. The polypeptide is Selenocysteine insertion sequence-binding protein 2 (Secisbp2) (Rattus norvegicus (Rat)).